A 184-amino-acid chain; its full sequence is Adenine phosphoribosyltransferase (184 aa).

It belongs to the purine/pyrimidine phosphoribosyltransferase family. As to quaternary structure, homodimer.

Its subcellular location is the cytoplasm. The catalysed reaction is AMP + diphosphate = 5-phospho-alpha-D-ribose 1-diphosphate + adenine. The protein operates within purine metabolism; AMP biosynthesis via salvage pathway; AMP from adenine: step 1/1. Functionally, catalyzes a salvage reaction resulting in the formation of AMP, that is energically less costly than de novo synthesis. This chain is Adenine phosphoribosyltransferase, found in Blochmanniella pennsylvanica (strain BPEN).